A 307-amino-acid chain; its full sequence is 4-diphosphocytidyl-2-C-methyl-D-erythritol kinase (307 aa).

Residue Lys14 is part of the active site. 107 to 117 serves as a coordination point for ATP; sequence PVAGGMAGGSA. Asp149 is an active-site residue.

This sequence belongs to the GHMP kinase family. IspE subfamily.

It catalyses the reaction 4-CDP-2-C-methyl-D-erythritol + ATP = 4-CDP-2-C-methyl-D-erythritol 2-phosphate + ADP + H(+). It functions in the pathway isoprenoid biosynthesis; isopentenyl diphosphate biosynthesis via DXP pathway; isopentenyl diphosphate from 1-deoxy-D-xylulose 5-phosphate: step 3/6. Functionally, catalyzes the phosphorylation of the position 2 hydroxy group of 4-diphosphocytidyl-2C-methyl-D-erythritol. This Thermobifida fusca (strain YX) protein is 4-diphosphocytidyl-2-C-methyl-D-erythritol kinase.